The primary structure comprises 100 residues: Co-chaperonin GroES (100 aa).

It belongs to the GroES chaperonin family. In terms of assembly, heptamer of 7 subunits arranged in a ring. Interacts with the chaperonin GroEL.

The protein localises to the cytoplasm. In terms of biological role, together with the chaperonin GroEL, plays an essential role in assisting protein folding. The GroEL-GroES system forms a nano-cage that allows encapsulation of the non-native substrate proteins and provides a physical environment optimized to promote and accelerate protein folding. GroES binds to the apical surface of the GroEL ring, thereby capping the opening of the GroEL channel. The polypeptide is Co-chaperonin GroES (Mycolicibacterium vanbaalenii (strain DSM 7251 / JCM 13017 / BCRC 16820 / KCTC 9966 / NRRL B-24157 / PYR-1) (Mycobacterium vanbaalenii)).